A 765-amino-acid polypeptide reads, in one-letter code: Probable serine/threonine-protein kinase DDB_G0271402 (765 aa).

One can recognise a Protein kinase domain in the interval 35-328 (LEFGQEIGKG…KEITERLKSL (294 aa)). ATP-binding positions include 41–49 (IGKGAYGKI) and lysine 62. Aspartate 192 serves as the catalytic Proton acceptor. Disordered stretches follow at residues 371-393 (IVHNNHNHSSSSNNSSGYNNNSN), 443-477 (SMGDESDLDSDDEDDSYTSSASSSRCNSRNGKIIN), 491-527 (SSDLESSPNGNNINNNNNNNNNNNNNNNNNNNNNNNS), 545-620 (PIQI…QQYQ), 654-684 (PLNISPTQNNNNNNNNSNNNNGNVNHNHHHL), 699-738 (IISSSSTTSSSTSTPSLVSLTSSRDHHHHHISVTSSPTNI), and 746-765 (ASNSSVFTPLGSGLTRTVQS). Residues 446–458 (DESDLDSDDEDDS) are compositionally biased toward acidic residues. Low complexity-rich tracts occupy residues 459–470 (YTSSASSSRCNS), 499–527 (NGNNINNNNNNNNNNNNNNNNNNNNNNNS), 562–605 (PPTS…PKSN), 662–678 (NNNNNNNNSNNNNGNVN), and 699–720 (IISSSSTTSSSTSTPSLVSLTS).

This sequence belongs to the protein kinase superfamily. TKL Ser/Thr protein kinase family.

The enzyme catalyses L-seryl-[protein] + ATP = O-phospho-L-seryl-[protein] + ADP + H(+). It carries out the reaction L-threonyl-[protein] + ATP = O-phospho-L-threonyl-[protein] + ADP + H(+). The chain is Probable serine/threonine-protein kinase DDB_G0271402 from Dictyostelium discoideum (Social amoeba).